Reading from the N-terminus, the 265-residue chain is MTLRLSGIELRHSDGTLALRGLDLNIAGGERVAIIGPSGAGKTTLLNLLASALPPSAGQLEVLGADPWQLSSKRRQRLRSRIALVHQAPPLPARQRVITAVSAGKLGQWGLGKSLLNLLHPLDVSGTREVLARLDLADKLFERCQQLSGGQLQRVGIARALYQAPELLLADEPVSAMDPRLADHTLALLCQHAIEHHVTLVASLHAVELALAHFPRIIGVRDGQIHFDLAANEVDRQHLDTLYANEQLSPQPAPDVSETPWTPRC.

The region spanning leucine 3–glutamine 247 is the ABC transporter domain. Glycine 36–threonine 43 lines the ATP pocket. The segment at asparagine 245–cysteine 265 is disordered.

This sequence belongs to the ABC transporter superfamily. Phosphonates importer (TC 3.A.1.9.1) family. As to quaternary structure, the complex is composed of two ATP-binding proteins (PhnC), two transmembrane proteins (PhnE) and a solute-binding protein (PhnD).

It is found in the cell inner membrane. It catalyses the reaction phosphonate(out) + ATP + H2O = phosphonate(in) + ADP + phosphate + H(+). Functionally, part of the ABC transporter complex PhnCDE involved in phosphonates import. Responsible for energy coupling to the transport system. The chain is Phosphonates import ATP-binding protein PhnC 1 from Pseudomonas savastanoi pv. phaseolicola (strain 1448A / Race 6) (Pseudomonas syringae pv. phaseolicola (strain 1448A / Race 6)).